Reading from the N-terminus, the 103-residue chain is O2 contryphan Vc1 (103 aa).

An N-terminal signal peptide occupies residues 1–23; sequence MGKLTILFLVAAALLSTQVMVQG. A propeptide spanning residues 24–67 is cleaved from the precursor; sequence DGAHERTEAEEPQHHGAKRQDGTGGYPVDDVDMMQRIFRTPLKR. A compositionally biased stretch (basic and acidic residues) spans 25–44; the sequence is GAHERTEAEEPQHHGAKRQD. Residues 25–50 are disordered; the sequence is GAHERTEAEEPQHHGAKRQDGTGGYP. Glutamine 68 bears the Pyrrolidone carboxylic acid mark. Cysteine 70 and cysteine 83 are oxidised to a cystine. The propeptide occupies 99-103; the sequence is RRGRQ.

The protein belongs to the O2 superfamily. Post-translationally, pyrrolidone carboxylic acid at position 1 has no significant effect on the structure of contryphan-Vc1. Expressed by the venom gland.

It localises to the secreted. Functionally, unknown. Intracranial injection of the peptide into mice does not produce toxic effects. In addition, the peptide does not produce any observable changes to normal or depolarization-induced intracellular calcium levels in mouse dorsal root ganglion cells. The protein is O2 contryphan Vc1 of Conus victoriae (Queen Victoria cone).